The sequence spans 240 residues: RNA-free ribonuclease P (240 aa).

The protein belongs to the HARP family.

It catalyses the reaction Endonucleolytic cleavage of RNA, removing 5'-extranucleotides from tRNA precursor.. Its function is as follows. RNA-free RNase P that catalyzes the removal of the 5'-leader sequence from pre-tRNA to produce the mature 5'-terminus. In Methanococcus aeolicus (strain ATCC BAA-1280 / DSM 17508 / OCM 812 / Nankai-3), this protein is RNA-free ribonuclease P.